The following is a 192-amino-acid chain: Molybdenum cofactor guanylyltransferase (192 aa).

GTP contacts are provided by residues 10 to 12, Lys-23, Asn-51, Asp-69, and Asp-99; that span reads LAG. Asp-99 is a Mg(2+) binding site.

Belongs to the MobA family. Monomer. The cofactor is Mg(2+).

It localises to the cytoplasm. It carries out the reaction Mo-molybdopterin + GTP + H(+) = Mo-molybdopterin guanine dinucleotide + diphosphate. In terms of biological role, transfers a GMP moiety from GTP to Mo-molybdopterin (Mo-MPT) cofactor (Moco or molybdenum cofactor) to form Mo-molybdopterin guanine dinucleotide (Mo-MGD) cofactor. The sequence is that of Molybdenum cofactor guanylyltransferase from Haemophilus influenzae (strain ATCC 51907 / DSM 11121 / KW20 / Rd).